A 272-amino-acid polypeptide reads, in one-letter code: Shikimate dehydrogenase (NADP(+)) (272 aa).

Shikimate is bound by residues 14–16 (SKS) and Thr61. The active-site Proton acceptor is the Lys65. Glu77 lines the NADP(+) pocket. Shikimate contacts are provided by Asn86 and Asp102. NADP(+) contacts are provided by residues 126–130 (GAGGA), 149–154 (NRTASR), and Met213. Tyr215 serves as a coordination point for shikimate. An NADP(+)-binding site is contributed by Gly237.

The protein belongs to the shikimate dehydrogenase family. In terms of assembly, homodimer.

It carries out the reaction shikimate + NADP(+) = 3-dehydroshikimate + NADPH + H(+). Its pathway is metabolic intermediate biosynthesis; chorismate biosynthesis; chorismate from D-erythrose 4-phosphate and phosphoenolpyruvate: step 4/7. Functionally, involved in the biosynthesis of the chorismate, which leads to the biosynthesis of aromatic amino acids. Catalyzes the reversible NADPH linked reduction of 3-dehydroshikimate (DHSA) to yield shikimate (SA). In Salmonella schwarzengrund (strain CVM19633), this protein is Shikimate dehydrogenase (NADP(+)).